The primary structure comprises 314 residues: MAEEPQRSPAPTSPFAFTVPSNPLSDLPDIPSDRPVLIAGPTASGKSALAARLVEDGGGVVVNADALQVYDCWRLLSARPSAAEEAALPHRLYGHVGARQTYSAGHWLKEVAAVLAEGLRPVIVGGTGLYFSALTEGLAEIPHTPPEVRAEADARLAEAGLARMVAELDAETAARIDLQNPARVQRAWEVLRATGRGLARWQAETAPPLLPLSDATALVIRPDPAWLAQRIDSRFDLMMADGALDEVRATLPGWDPALPSARAIGAPELVAHLRGEIPLDEAIAAAKLASRQYAKRQRTWFRNRMRLWHEIRLP.

The tract at residues 1 to 24 is disordered; that stretch reads MAEEPQRSPAPTSPFAFTVPSNPL. 40–47 lines the ATP pocket; the sequence is GPTASGKS. 42 to 47 lines the substrate pocket; that stretch reads TASGKS.

This sequence belongs to the IPP transferase family. Monomer. Mg(2+) serves as cofactor.

The catalysed reaction is adenosine(37) in tRNA + dimethylallyl diphosphate = N(6)-dimethylallyladenosine(37) in tRNA + diphosphate. Functionally, catalyzes the transfer of a dimethylallyl group onto the adenine at position 37 in tRNAs that read codons beginning with uridine, leading to the formation of N6-(dimethylallyl)adenosine (i(6)A). This Cereibacter sphaeroides (strain ATCC 17029 / ATH 2.4.9) (Rhodobacter sphaeroides) protein is tRNA dimethylallyltransferase.